We begin with the raw amino-acid sequence, 212 residues long: Pyrrolidone-carboxylate peptidase (212 aa).

Active-site residues include Glu80, Cys143, and His165.

The protein belongs to the peptidase C15 family. In terms of assembly, homotetramer.

The protein localises to the cytoplasm. It catalyses the reaction Release of an N-terminal pyroglutamyl group from a polypeptide, the second amino acid generally not being Pro.. In terms of biological role, removes 5-oxoproline from various penultimate amino acid residues except L-proline. This Vibrio vulnificus (strain CMCP6) protein is Pyrrolidone-carboxylate peptidase.